Reading from the N-terminus, the 171-residue chain is uncharacterized protein (171 aa).

Residues 30–97 form the HTH gntR-type domain; the sequence is AGRVSAAYHA…PKKGIIICAL (68 aa). The segment at residues 57–76 is a DNA-binding region (H-T-H motif); that stretch reads EIEIARQLGMSRTPVHEAMA.

This is an uncharacterized protein from Agrobacterium vitis (Rhizobium vitis).